The sequence spans 354 residues: Sulfate/thiosulfate import ATP-binding protein CysA 2 (354 aa).

One can recognise an ABC transporter domain in the interval 3–237; sequence IHIQQVNKHF…PSNPFVYEFL (235 aa). 35–42 serves as a coordination point for ATP; it reads GPSGSGKT.

This sequence belongs to the ABC transporter superfamily. Sulfate/tungstate importer (TC 3.A.1.6) family. The complex is composed of two ATP-binding proteins (CysA), two transmembrane proteins (CysT and CysW) and a solute-binding protein (CysP).

The protein localises to the cell inner membrane. The catalysed reaction is sulfate(out) + ATP + H2O = sulfate(in) + ADP + phosphate + H(+). It catalyses the reaction thiosulfate(out) + ATP + H2O = thiosulfate(in) + ADP + phosphate + H(+). Functionally, part of the ABC transporter complex CysAWTP involved in sulfate/thiosulfate import. Responsible for energy coupling to the transport system. This Shewanella oneidensis (strain ATCC 700550 / JCM 31522 / CIP 106686 / LMG 19005 / NCIMB 14063 / MR-1) protein is Sulfate/thiosulfate import ATP-binding protein CysA 2.